The sequence spans 373 residues: tRNA N6-adenosine threonylcarbamoyltransferase (373 aa).

A divalent metal cation-binding residues include His128, His132, and Tyr149. Substrate is bound by residues 149-153, Asp181, Gly196, Glu200, and Asn302; that span reads YVSGG. Position 331 (Asp331) interacts with a divalent metal cation.

The protein belongs to the KAE1 / TsaD family. As to quaternary structure, component of the EKC/KEOPS complex composed of at least BUD32, CGI121, GON7, KAE1 and PCC1; the whole complex dimerizes. The cofactor is a divalent metal cation.

The protein localises to the cytoplasm. Its subcellular location is the nucleus. It catalyses the reaction L-threonylcarbamoyladenylate + adenosine(37) in tRNA = N(6)-L-threonylcarbamoyladenosine(37) in tRNA + AMP + H(+). Component of the EKC/KEOPS complex that is required for the formation of a threonylcarbamoyl group on adenosine at position 37 (t(6)A37) in tRNAs that read codons beginning with adenine. The complex is probably involved in the transfer of the threonylcarbamoyl moiety of threonylcarbamoyl-AMP (TC-AMP) to the N6 group of A37. KAE1 likely plays a direct catalytic role in this reaction, but requires other protein(s) of the complex to fulfill this activity. The EKC/KEOPS complex also promotes both telomere uncapping and telomere elongation. The complex is required for efficient recruitment of transcriptional coactivators. The protein is tRNA N6-adenosine threonylcarbamoyltransferase of Candida glabrata (strain ATCC 2001 / BCRC 20586 / JCM 3761 / NBRC 0622 / NRRL Y-65 / CBS 138) (Yeast).